The sequence spans 333 residues: Ketol-acid reductoisomerase (NADP(+)) (333 aa).

Residues 6–186 (TRVYTECDAD…GALRAGAIQT (181 aa)) form the KARI N-terminal Rossmann domain. Residues 29-32 (YGSQ), Lys52, Ser55, Ser57, and 87-90 (DPAQ) contribute to the NADP(+) site. His112 is a catalytic residue. Residue Gly138 coordinates NADP(+). One can recognise a KARI C-terminal knotted domain in the interval 187-332 (TFTEETETDL…ARLRALFSWS (146 aa)). Mg(2+) is bound by residues Asp195, Glu199, Glu231, and Glu235. Position 256 (Ser256) interacts with substrate.

This sequence belongs to the ketol-acid reductoisomerase family. Mg(2+) serves as cofactor.

It catalyses the reaction (2R)-2,3-dihydroxy-3-methylbutanoate + NADP(+) = (2S)-2-acetolactate + NADPH + H(+). The catalysed reaction is (2R,3R)-2,3-dihydroxy-3-methylpentanoate + NADP(+) = (S)-2-ethyl-2-hydroxy-3-oxobutanoate + NADPH + H(+). The protein operates within amino-acid biosynthesis; L-isoleucine biosynthesis; L-isoleucine from 2-oxobutanoate: step 2/4. It functions in the pathway amino-acid biosynthesis; L-valine biosynthesis; L-valine from pyruvate: step 2/4. In terms of biological role, involved in the biosynthesis of branched-chain amino acids (BCAA). Catalyzes an alkyl-migration followed by a ketol-acid reduction of (S)-2-acetolactate (S2AL) to yield (R)-2,3-dihydroxy-isovalerate. In the isomerase reaction, S2AL is rearranged via a Mg-dependent methyl migration to produce 3-hydroxy-3-methyl-2-ketobutyrate (HMKB). In the reductase reaction, this 2-ketoacid undergoes a metal-dependent reduction by NADPH to yield (R)-2,3-dihydroxy-isovalerate. The sequence is that of Ketol-acid reductoisomerase (NADP(+)) from Tropheryma whipplei (strain TW08/27) (Whipple's bacillus).